The primary structure comprises 412 residues: rRNA methyltransferase 1, mitochondrial (412 aa).

The transit peptide at 1–20 directs the protein to the mitochondrion; sequence MTSLTNAVFKRYLAVTPSAH.

Belongs to the class IV-like SAM-binding methyltransferase superfamily. RNA methyltransferase TrmH family.

The protein localises to the mitochondrion. It carries out the reaction guanosine(2270) in 21S rRNA + S-adenosyl-L-methionine = 2'-O-methylguanosine(2270) in 21S rRNA + S-adenosyl-L-homocysteine + H(+). Its function is as follows. S-adenosyl-L-methionine-dependent 2'-O-ribose methyltransferase that catalyzes the formation of 2'-O-methylguanosine at position 2270 (Gm2270) in the 21S mitochondrial large subunit ribosomal RNA (mtLSU rRNA), a universally conserved modification in the peptidyl transferase domain of the mtLSU rRNA. This modification seems to be important for the normal accumulation of the mitochondrial large ribosomal subunit. In Saccharomyces cerevisiae (strain ATCC 204508 / S288c) (Baker's yeast), this protein is rRNA methyltransferase 1, mitochondrial.